The primary structure comprises 166 residues: Disulfide bond formation protein B (166 aa).

Over 1-11 (MCNKLFAGRRG) the chain is Cytoplasmic. The helical transmembrane segment at 12-28 (YFLGFVASFGLVGLALF) threads the bilayer. Residues 29 to 46 (LQQKYNLEPCPLCISQRI) are Periplasmic-facing. The cysteines at positions 38 and 41 are disulfide-linked. Residues 47 to 63 (AFMALGILFLLAALHNP) form a helical membrane-spanning segment. The Cytoplasmic segment spans residues 64-69 (GRVGRK). The helical transmembrane segment at 70–87 (VYGLLHVIAAATGIGIAA) threads the bilayer. The Periplasmic portion of the chain corresponds to 88-144 (RHIWIQANPDKVMAECGAGFDYIMETFPLKKALDLIFKGTGECSAIDWTLFGLTIPQ). Cys-103 and Cys-130 form a disulfide bridge. A helical membrane pass occupies residues 145 to 163 (LSLIAFVGLGLFAVLLAFH). Residues 164–166 (KKA) lie on the Cytoplasmic side of the membrane.

Belongs to the DsbB family.

The protein localises to the cell inner membrane. Its function is as follows. Required for disulfide bond formation in some periplasmic proteins. Acts by oxidizing the DsbA protein. The sequence is that of Disulfide bond formation protein B from Methylobacillus flagellatus (strain ATCC 51484 / DSM 6875 / VKM B-1610 / KT).